Consider the following 234-residue polypeptide: ATP-dependent dethiobiotin synthetase BioD (234 aa).

12–17 contributes to the ATP binding site; the sequence is DVGKTF. T16 provides a ligand contact to Mg(2+). K37 is an active-site residue. T41 provides a ligand contact to substrate. ATP-binding positions include D54 and 115-118; that span reads EGAG. D54 and E115 together coordinate Mg(2+).

Belongs to the dethiobiotin synthetase family. In terms of assembly, homodimer. Mg(2+) is required as a cofactor.

The protein localises to the cytoplasm. The catalysed reaction is (7R,8S)-7,8-diammoniononanoate + CO2 + ATP = (4R,5S)-dethiobiotin + ADP + phosphate + 3 H(+). It functions in the pathway cofactor biosynthesis; biotin biosynthesis; biotin from 7,8-diaminononanoate: step 1/2. Functionally, catalyzes a mechanistically unusual reaction, the ATP-dependent insertion of CO2 between the N7 and N8 nitrogen atoms of 7,8-diaminopelargonic acid (DAPA, also called 7,8-diammoniononanoate) to form a ureido ring. The polypeptide is ATP-dependent dethiobiotin synthetase BioD (Lysinibacillus sphaericus (Bacillus sphaericus)).